A 115-amino-acid chain; its full sequence is MEKAYRIKRNSDFQAIYKNGKSVANRQFVVYTYKNRDLKHFRLGISVSKKLGNAVTRNRIKRAIRENFKVHKQNIIAKDIIVIARQPAKDMNTLEIQSSLEHVLKIAKVFNKKIK.

Belongs to the RnpA family. In terms of assembly, consists of a catalytic RNA component (M1 or rnpB) and a protein subunit.

It catalyses the reaction Endonucleolytic cleavage of RNA, removing 5'-extranucleotides from tRNA precursor.. RNaseP catalyzes the removal of the 5'-leader sequence from pre-tRNA to produce the mature 5'-terminus. It can also cleave other RNA substrates such as 4.5S RNA. The protein component plays an auxiliary but essential role in vivo by binding to the 5'-leader sequence and broadening the substrate specificity of the ribozyme. This chain is Ribonuclease P protein component, found in Staphylococcus epidermidis (strain ATCC 35984 / DSM 28319 / BCRC 17069 / CCUG 31568 / BM 3577 / RP62A).